Here is a 237-residue protein sequence, read N- to C-terminus: Transcriptional regulatory protein YvrH (237 aa).

In terms of domain architecture, Response regulatory spans Ser-5–Leu-119. 4-aspartylphosphate is present on Asp-55. The ompR/PhoB-type DNA-binding region spans Asn-131–Pro-230.

Post-translationally, phosphorylated by YvrG.

The protein resides in the cytoplasm. In terms of biological role, member of the two-component regulatory system YvrG/YvrH that positively regulates 7 transcriptional units (wprA, wapA-yxxG, dltABCDE, sunA, sunT-bdbA-yolJ-bdbB, sigO-rsoA, and sigX-rsiX), and negatively regulates the lytABC operon. The sequence is that of Transcriptional regulatory protein YvrH (yvrH) from Bacillus subtilis (strain 168).